A 1372-amino-acid polypeptide reads, in one-letter code: DNA-directed RNA polymerase subunit beta (1372 aa).

This sequence belongs to the RNA polymerase beta chain family. The RNAP catalytic core consists of 2 alpha, 1 beta, 1 beta' and 1 omega subunit. When a sigma factor is associated with the core the holoenzyme is formed, which can initiate transcription.

The enzyme catalyses RNA(n) + a ribonucleoside 5'-triphosphate = RNA(n+1) + diphosphate. Its function is as follows. DNA-dependent RNA polymerase catalyzes the transcription of DNA into RNA using the four ribonucleoside triphosphates as substrates. The chain is DNA-directed RNA polymerase subunit beta from Nitratidesulfovibrio vulgaris (strain DP4) (Desulfovibrio vulgaris).